Reading from the N-terminus, the 129-residue chain is Small ribosomal subunit protein uS11 (129 aa).

The protein belongs to the universal ribosomal protein uS11 family. Part of the 30S ribosomal subunit. Interacts with proteins S7 and S18. Binds to IF-3.

In terms of biological role, located on the platform of the 30S subunit, it bridges several disparate RNA helices of the 16S rRNA. Forms part of the Shine-Dalgarno cleft in the 70S ribosome. The protein is Small ribosomal subunit protein uS11 of Nitrosospira multiformis (strain ATCC 25196 / NCIMB 11849 / C 71).